A 181-amino-acid chain; its full sequence is Protein Syd (181 aa).

Belongs to the Syd family.

Its subcellular location is the cell inner membrane. Its function is as follows. Interacts with the SecY protein in vivo. May bind preferentially to an uncomplexed state of SecY, thus functioning either as a chelating agent for excess SecY in the cell or as a regulatory factor that negatively controls the translocase function. This is Protein Syd from Klebsiella pneumoniae (strain 342).